A 253-amino-acid chain; its full sequence is MSTQGLVQLISNAQCHLRTSTNYNDVHTQFNAVLNYKNKGTNTIDGSEAWCSSIVDTNQYIVAGCEVPRTFMCVALQGRGDHDQWVTSYKIRYSLDNVTWSEYRNGAAITGVTDRNTVVNHFFDTPIRARSIAIHPLTWNNHISLRCEFYTQPVQSSVTQVGADIYTGDNCALNTGSGKREVVVPVKFQFEFATLPKVALNFDQIDCTDATNQTRIGVQPRNITTKGFDCVFYTWNANKVYSLRADYIATALE.

Ser2 is subject to N-acetylserine. In terms of domain architecture, F5/8 type C spans 2–152; the sequence is STQGLVQLIS…ISLRCEFYTQ (151 aa). Residues 79–81 carry the Cell attachment site motif; the sequence is RGD.

Tetramer of four different chains (A to D). In terms of tissue distribution, stalk cells.

It is found in the cytoplasm. Functionally, galactose- and N-acetylgalactosamine-binding lectin. May play a role in cell-substratum adhesion rather than in cell-cell adhesion. May be necessary for the maintenance of normal elongate morphology during aggregation. This chain is Discoidin-1 subunit B/C (dscC-1), found in Dictyostelium discoideum (Social amoeba).